The sequence spans 258 residues: 5'-nucleotidase SurE (258 aa).

Residues D9, D10, S42, and N95 each contribute to the a divalent metal cation site.

It belongs to the SurE nucleotidase family. A divalent metal cation serves as cofactor.

The protein resides in the cytoplasm. It catalyses the reaction a ribonucleoside 5'-phosphate + H2O = a ribonucleoside + phosphate. In terms of biological role, nucleotidase that shows phosphatase activity on nucleoside 5'-monophosphates. The sequence is that of 5'-nucleotidase SurE from Campylobacter concisus (strain 13826).